The following is a 371-amino-acid chain: Queuine tRNA-ribosyltransferase (371 aa).

Residue Asp90 is the Proton acceptor of the active site. Residues 90 to 94 (DSGGF), Asp144, Gln189, and Gly215 contribute to the substrate site. The RNA binding stretch occupies residues 246-252 (GVGTPEN). Asp265 functions as the Nucleophile in the catalytic mechanism. Residues 270-274 (TRNAR) are RNA binding; important for wobble base 34 recognition. Positions 303, 305, 308, and 334 each coordinate Zn(2+).

The protein belongs to the queuine tRNA-ribosyltransferase family. As to quaternary structure, homodimer. Within each dimer, one monomer is responsible for RNA recognition and catalysis, while the other monomer binds to the replacement base PreQ1. The cofactor is Zn(2+).

It carries out the reaction 7-aminomethyl-7-carbaguanine + guanosine(34) in tRNA = 7-aminomethyl-7-carbaguanosine(34) in tRNA + guanine. Its pathway is tRNA modification; tRNA-queuosine biosynthesis. Functionally, catalyzes the base-exchange of a guanine (G) residue with the queuine precursor 7-aminomethyl-7-deazaguanine (PreQ1) at position 34 (anticodon wobble position) in tRNAs with GU(N) anticodons (tRNA-Asp, -Asn, -His and -Tyr). Catalysis occurs through a double-displacement mechanism. The nucleophile active site attacks the C1' of nucleotide 34 to detach the guanine base from the RNA, forming a covalent enzyme-RNA intermediate. The proton acceptor active site deprotonates the incoming PreQ1, allowing a nucleophilic attack on the C1' of the ribose to form the product. After dissociation, two additional enzymatic reactions on the tRNA convert PreQ1 to queuine (Q), resulting in the hypermodified nucleoside queuosine (7-(((4,5-cis-dihydroxy-2-cyclopenten-1-yl)amino)methyl)-7-deazaguanosine). The chain is Queuine tRNA-ribosyltransferase from Helicobacter pylori (strain HPAG1).